The following is a 219-amino-acid chain: uncharacterized protein (219 aa).

The next 5 membrane-spanning stretches (helical) occupy residues 14-34 (LVYSFPIVMAYIPVAFTFGVL), 37-57 (TLGFSEVEAMLASLLIFAGAS), 123-143 (FLLGLELGSYSAWVGGTALGV), 155-175 (VYSALVFSISALFLVLLLPNL), and 189-209 (VALAFHLLNLTSVGIIAAALA).

This sequence belongs to the AzlC family.

The protein localises to the cell membrane. This is an uncharacterized protein from Archaeoglobus fulgidus (strain ATCC 49558 / DSM 4304 / JCM 9628 / NBRC 100126 / VC-16).